A 92-amino-acid polypeptide reads, in one-letter code: uncharacterized protein (92 aa).

This is an uncharacterized protein from Bacillus subtilis (strain 168).